Here is a 311-residue protein sequence, read N- to C-terminus: Probable mitochondrial phosphate carrier protein (311 aa).

Over 1–23 the chain is Mitochondrial intermembrane; the sequence is MSTPLIPPAPPKKTLQLYTPQYY. Solcar repeat units follow at residues 21–105, 118–203, and 219–303; these read QYYG…FKHK, YRTS…IVEA, and EKIG…FKIM. Residues 24–44 form a helical membrane-spanning segment; sequence GLCTLGGLLACGTTHSAITPL. The Mitochondrial matrix segment spans residues 45-67; it reads DLIKCRKQVNPNIYPGNIAGFKT. Residues 68-88 form a helical membrane-spanning segment; it reads ILSKEGLRGLYTGGMPTLIGY. Over 89 to 120 the chain is Mitochondrial intermembrane; sequence SLQGCGKYGFYELFKHKYSTLVGAQKAHEYRT. A helical membrane pass occupies residues 121–141; it reads SIYLAASASAELLADIMLCPM. The Mitochondrial matrix segment spans residues 142 to 171; sequence EAIKVRVQTSNPRFANTTREAWSKIVTNEG. A helical transmembrane segment spans residues 172–192; that stretch reads FGTLYRGLAPLWFRQIPYTMM. Topologically, residues 193–220 are mitochondrial intermembrane; sequence KFASFERIVEALYTYIGKPKNMYSKAEK. Residues 221–241 form a helical membrane-spanning segment; sequence IGISFAGGYMAGVLCAIISHP. Residues 242-269 lie on the Mitochondrial matrix side of the membrane; sequence ADVMVSKLNSNKKAGEGAGAAAARIYKE. The chain crosses the membrane as a helical span at residues 270–290; the sequence is IGFSGLWNGLGVRIVMIGTLT. At 291-311 the chain is on the mitochondrial intermembrane side; it reads GAQWLIYDSFKIMCGFPATGA.

Belongs to the mitochondrial carrier (TC 2.A.29) family.

It is found in the mitochondrion inner membrane. In terms of biological role, transport of phosphate groups from the cytosol to the mitochondrial matrix. In Schizosaccharomyces pombe (strain 972 / ATCC 24843) (Fission yeast), this protein is Probable mitochondrial phosphate carrier protein.